We begin with the raw amino-acid sequence, 406 residues long: tRNA-specific 2-thiouridylase MnmA (406 aa).

ATP is bound by residues 42-49 (GLSGGVDS) and leucine 68. Cysteine 129 (nucleophile) is an active-site residue. Residues cysteine 129 and cysteine 237 are joined by a disulfide bond. Residue glycine 154 coordinates ATP. An interaction with tRNA region spans residues 187–189 (KDQ). The Cysteine persulfide intermediate role is filled by cysteine 237. The segment at 342–343 (RY) is interaction with tRNA.

Belongs to the MnmA/TRMU family.

It localises to the cytoplasm. The catalysed reaction is S-sulfanyl-L-cysteinyl-[protein] + uridine(34) in tRNA + AH2 + ATP = 2-thiouridine(34) in tRNA + L-cysteinyl-[protein] + A + AMP + diphosphate + H(+). Catalyzes the 2-thiolation of uridine at the wobble position (U34) of tRNA, leading to the formation of s(2)U34. This is tRNA-specific 2-thiouridylase MnmA from Prochlorococcus marinus (strain MIT 9211).